The chain runs to 319 residues: Acetyl-coenzyme A carboxylase carboxyl transferase subunit beta (319 aa).

Residues 24 to 293 form the CoA carboxyltransferase N-terminal domain; sequence LWIKCPDTGQ…MIEQEPEPSA (270 aa). The interval 282-319 is disordered; sequence PEMIEQEPEPSAPVPPDEPDEPAATQEAPPAAPAAPPA.

Belongs to the AccD/PCCB family. Acetyl-CoA carboxylase is a heterohexamer composed of biotin carboxyl carrier protein (AccB), biotin carboxylase (AccC) and two subunits each of ACCase subunit alpha (AccA) and ACCase subunit beta (AccD).

Its subcellular location is the cytoplasm. The enzyme catalyses N(6)-carboxybiotinyl-L-lysyl-[protein] + acetyl-CoA = N(6)-biotinyl-L-lysyl-[protein] + malonyl-CoA. It functions in the pathway lipid metabolism; malonyl-CoA biosynthesis; malonyl-CoA from acetyl-CoA: step 1/1. In terms of biological role, component of the acetyl coenzyme A carboxylase (ACC) complex. Biotin carboxylase (BC) catalyzes the carboxylation of biotin on its carrier protein (BCCP) and then the CO(2) group is transferred by the transcarboxylase to acetyl-CoA to form malonyl-CoA. This Nitrobacter winogradskyi (strain ATCC 25391 / DSM 10237 / CIP 104748 / NCIMB 11846 / Nb-255) protein is Acetyl-coenzyme A carboxylase carboxyl transferase subunit beta.